The chain runs to 529 residues: Serine/threonine-protein kinase RIO2 (529 aa).

The Protein kinase domain maps to 97-273 (VGNQIGIGKE…RDVTCVRTFF (177 aa)). Residue Lys-123 participates in ATP binding. The active-site Proton acceptor is Asp-228. 2 disordered regions span residues 331–366 (RNRQ…KDHE) and 411–452 (EGYK…GHVA). Positions 337–346 (DLGEDEDDSD) are enriched in acidic residues. Over residues 411 to 428 (EGYKDIELPPEDFKRPAD) the composition is skewed to basic and acidic residues. Residues 429–447 (SENDDENDEDEEEGEEEDA) show a composition bias toward acidic residues.

Belongs to the protein kinase superfamily. RIO-type Ser/Thr kinase family. Mg(2+) serves as cofactor. As to expression, expressed in pharynx (metacorpus and posterior bulbus). Expression is restricted to adult stage.

The catalysed reaction is L-seryl-[protein] + ATP = O-phospho-L-seryl-[protein] + ADP + H(+). The enzyme catalyses L-threonyl-[protein] + ATP = O-phospho-L-threonyl-[protein] + ADP + H(+). Its function is as follows. Required for larval development. This chain is Serine/threonine-protein kinase RIO2, found in Caenorhabditis elegans.